A 370-amino-acid chain; its full sequence is Biotin synthase (370 aa).

A Radical SAM core domain is found at 56–283 (NAVQVSTLLS…KSHVRLSAGR (228 aa)). [4Fe-4S] cluster is bound by residues cysteine 71, cysteine 75, and cysteine 78. Positions 115, 146, 206, and 278 each coordinate [2Fe-2S] cluster. The segment covering 327 to 344 (GLHPEPSDPHADDAHRDD) has biased composition (basic and acidic residues). Positions 327–346 (GLHPEPSDPHADDAHRDDEQ) are disordered.

It belongs to the radical SAM superfamily. Biotin synthase family. Homodimer. The cofactor is [4Fe-4S] cluster. Requires [2Fe-2S] cluster as cofactor.

The catalysed reaction is (4R,5S)-dethiobiotin + (sulfur carrier)-SH + 2 reduced [2Fe-2S]-[ferredoxin] + 2 S-adenosyl-L-methionine = (sulfur carrier)-H + biotin + 2 5'-deoxyadenosine + 2 L-methionine + 2 oxidized [2Fe-2S]-[ferredoxin]. The protein operates within cofactor biosynthesis; biotin biosynthesis; biotin from 7,8-diaminononanoate: step 2/2. In terms of biological role, catalyzes the conversion of dethiobiotin (DTB) to biotin by the insertion of a sulfur atom into dethiobiotin via a radical-based mechanism. This is Biotin synthase from Chromohalobacter salexigens (strain ATCC BAA-138 / DSM 3043 / CIP 106854 / NCIMB 13768 / 1H11).